We begin with the raw amino-acid sequence, 578 residues long: Proline--tRNA ligase (578 aa).

It belongs to the class-II aminoacyl-tRNA synthetase family. ProS type 1 subfamily. As to quaternary structure, homodimer.

The protein localises to the cytoplasm. It catalyses the reaction tRNA(Pro) + L-proline + ATP = L-prolyl-tRNA(Pro) + AMP + diphosphate. Catalyzes the attachment of proline to tRNA(Pro) in a two-step reaction: proline is first activated by ATP to form Pro-AMP and then transferred to the acceptor end of tRNA(Pro). As ProRS can inadvertently accommodate and process non-cognate amino acids such as alanine and cysteine, to avoid such errors it has two additional distinct editing activities against alanine. One activity is designated as 'pretransfer' editing and involves the tRNA(Pro)-independent hydrolysis of activated Ala-AMP. The other activity is designated 'posttransfer' editing and involves deacylation of mischarged Ala-tRNA(Pro). The misacylated Cys-tRNA(Pro) is not edited by ProRS. This chain is Proline--tRNA ligase, found in Burkholderia mallei (strain ATCC 23344).